A 36-amino-acid chain; its full sequence is Mu/kappa-theraphotoxin-Ap1a (36 aa).

Intrachain disulfides connect C3–C18, C10–C23, and C17–C30. At F36 the chain carries Phenylalanine amide.

It belongs to the neurotoxin 10 (Hwtx-1) family. As to expression, expressed by the venom gland.

Its subcellular location is the secreted. Functionally, inhibitor of voltage-gated potassium and sodium channels. Among other potassium channels, it selectively inhibits Kv10.1/KCNH1/EAG1 (IC(50)=236 nM) by shifting the voltage dependence of channel activation in a depolarising direction, it shows a maximum inhibition of 80% at saturating concentrations, it shows fast on-rates, and is poorly reversible. It also slightly affects channel inactivation, when the membrane is highly depolarised (&gt;+80 mV). It shows similar potency on Nav1.7/SCN9A (IC(50)=222 nM) and lower potency on Nav1.2/SCN2A (IC(50)=519 nM). The protein is Mu/kappa-theraphotoxin-Ap1a of Avicularia purpurea (Ecuadorian purple pinktoe tarantula).